The following is a 253-amino-acid chain: Core protein VP8 (253 aa).

The propeptide occupies 1-31; that stretch reads MNDLLLENLFGEKALCAQVTRDQLLEIIAAG.

This sequence belongs to the chordopoxvirinae VP8 family. Undergoes morphogenesis-associated proteolysis which cleaves the 28 kDa to a 25-kDa product. Proteolytic cleavage of major core proteins P4a (A10L), P4b (A3L), and VP8 (L4R), which occurs at a late stage of core formation, is required for production of infectious mature virions (MV).

It is found in the virion. In terms of biological role, major core structural protein. The polypeptide is Core protein VP8 (Vertebrata (FPV)).